We begin with the raw amino-acid sequence, 549 residues long: Neurofilament light polypeptide (549 aa).

S2 carries the N-acetylserine modification. The head stretch occupies residues 2-92; sequence SSFYSEPYYS…KSIRTQEKAQ (91 aa). T21 carries O-linked (GlcNAc) threonine glycosylation. Residue R23 is modified to Asymmetric dimethylarginine; alternate. Position 23 is an omega-N-methylarginine; alternate (R23). A glycan (O-linked (GlcNAc) serine) is linked at S27. Omega-N-methylarginine is present on R30. Position 43 is a phosphotyrosine (Y43). Phosphoserine is present on residues S56, S66, and S102. The region spanning 89–400 is the IF rod domain; it reads EKAQLQDLND…KLLEGEETRL (312 aa). The segment at 93–124 is coil 1A; the sequence is LQDLNDRFASFIERVHELEQQNKVLEAQLLVL. The segment at 125 to 137 is linker 1; the sequence is RQKHSEPSRFRAL. The tract at residues 138 to 233 is coil 1B; the sequence is YEQEIRDLRL…KVHEEEIAEL (96 aa). The linker 12 stretch occupies residues 234–252; sequence QAQIQYAQISVEMDVSSKP. Residues 253–271 form a coil 2A region; the sequence is DLSAALKDIRAQYEKLAAK. Positions 272–280 are linker 2; it reads NMQNAEEWF. Positions 281 to 396 are coil 2B; it reads KSRFTVLTES…AAYRKLLEGE (116 aa). The epitope; recognized by IF-specific monoclonal antibody stretch occupies residues 381–391; the sequence is ALDIEIAAYRK. Residues 397–443 form a tail, subdomain A region; that stretch reads ETRLSFTSVGSLTTGYSQSSQVFGRSAYGGLQTSSYLMSTRSFPSYY. A tail region spans residues 397-549; that stretch reads ETRLSFTSVG…GEEQATKKKD (153 aa). The tract at residues 444-549 is tail, subdomain B (acidic); the sequence is TSHVQEEQIE…GEEQATKKKD (106 aa). Residues 462 to 549 form a disordered region; it reads KAEEAKDEPP…GEEQATKKKD (88 aa). Acidic residues predominate over residues 471-534; the sequence is PSEGEAEEEG…ETKEAEEEEK (64 aa). Phosphoserine is present on S472. Position 526 is a phosphothreonine (T526). Positions 535–549 are enriched in basic and acidic residues; sequence KDEGAGEEQATKKKD.

It belongs to the intermediate filament family. In terms of assembly, forms homodimers (in vitro). Forms heterodimers with NEFH or NEFM; which can further hetero-oligomerize (in vitro). Forms heterodimers with INA (in vitro). Interacts with ARHGEF28. Interacts with TRIM2. Post-translationally, O-glycosylated. Phosphorylated in the head and rod regions by the PKC kinase PKN1, leading to the inhibition of polymerization. In terms of processing, ubiquitinated in the presence of TRIM2 and UBE2D1.

The protein resides in the cell projection. The protein localises to the axon. It localises to the cytoplasm. Its subcellular location is the cytoskeleton. In terms of biological role, neurofilaments usually contain three intermediate filament proteins: NEFL, NEFM, and NEFH which are involved in the maintenance of neuronal caliber. May additionally cooperate with the neuronal intermediate filament proteins PRPH and INA to form neuronal filamentous networks. The protein is Neurofilament light polypeptide (NEFL) of Sus scrofa (Pig).